We begin with the raw amino-acid sequence, 499 residues long: Protein NODULATION SIGNALING PATHWAY 2 (499 aa).

Residues 64–106 (NNTGPAFSDHTASTTSEEEEEEEATTTTMTTTTTTTTTTPEAA) are disordered. The segment covering 88–104 (TTTTMTTTTTTTTTTPE) has biased composition (low complexity). The GRAS domain occupies 106-491 (ADDDFKGLRL…RRLLSASLWT (386 aa)). The segment at 113–182 (LRLVHLLMAG…AGGAYNSSSK (70 aa)) is leucine repeat I (LRI). Residues 201–265 (FQLLQDMSPY…PNGPHLRITA (65 aa)) are VHIID. The VHIID motif lies at 232-236 (VHIVD). Residues 281–313 (ETGRRLTAFATSLGQPFSFHHSRLESDETFRPA) form a leucine repeat II (LRII) region. A PFYRE region spans residues 323-414 (LVFNCMLNLP…RVFLGPRIVG (92 aa)). The segment at 417–491 (ARIYRTGGGG…RRLLSASLWT (75 aa)) is SAW.

It belongs to the GRAS family. Interacts with IPN2. Binds to RAD1. Interacts with RAM1. As to expression, highly expressed in roots.

The protein localises to the nucleus membrane. It is found in the endoplasmic reticulum. Transcriptional regulator essential for Nod-factor-induced gene expression. Acts downstream of calcium spiking and a calcium/calmodulin-dependent protein kinase required for activation of early nodulation gene expression. Transcription factor involved in the induction of NIN and ENOD40 genes, which are required for rhizobial infection and early nodule development. Does not seem to contribute to the early steps of the arbuscular mycorrhizal fungus infection and colonization processes in roots. Transcription factor involved in the positive regulation of the beta-carotene isomerase D27, which participates in a pathway leading to biosynthesis of strigolactones in roots. The polypeptide is Protein NODULATION SIGNALING PATHWAY 2 (Lotus japonicus (Lotus corniculatus var. japonicus)).